The following is a 137-amino-acid chain: Large ribosomal subunit protein uL16c (137 aa).

Residues 1–21 (MLSPKRTKFRRHHRGRMKGKA) are disordered.

It belongs to the universal ribosomal protein uL16 family. In terms of assembly, part of the 50S ribosomal subunit.

It localises to the plastid. The protein localises to the chloroplast. In Tupiella akineta (Green alga), this protein is Large ribosomal subunit protein uL16c.